The chain runs to 219 residues: Large ribosomal subunit protein uL16 (219 aa).

It belongs to the universal ribosomal protein uL16 family. In terms of assembly, component of the large ribosomal subunit. Mature ribosomes consist of a small (40S) and a large (60S) subunit. The 40S subunit contains about 33 different proteins and 1 molecule of RNA (18S). The 60S subunit contains about 49 different proteins and 3 molecules of RNA (28S, 5.8S and 5S).

The chain is Large ribosomal subunit protein uL16 (RpL10) from Bombyx mandarina (Wild silk moth).